The primary structure comprises 692 residues: Follicle-stimulating hormone receptor (692 aa).

The N-terminal stretch at 1-17 (MALLLVSLLAFLGTGSG) is a signal peptide. Cystine bridges form between Cys-18-Cys-25 and Cys-23-Cys-32. In terms of domain architecture, LRRNT spans 18-46 (CHHWLCHCSNRVFLCQDSKVTEIPTDLPR). Residues 18 to 365 (CHHWLCHCSN…EDIMGYNILR (348 aa)) are Extracellular-facing. LRR repeat units follow at residues 49–72 (IELRFVLTKLRVIPKGSFAGFGDL), 73–97 (EKIEISQNDVLEVIEADVFSNLPKL), 98–118 (HEIRIEKANNLLYINPEAFQN), 119–143 (LPSLRYLLISNTGIKHLPAVHKIQS), 144–169 (LQKVLLDIQDNINIHIVARNSFMGLS), 170–192 (FESVILWLSKNGIEEIHNCAFNG), 193–216 (TQLDELNLSDNNNLEELPNDVFQG), 217–240 (ASGPVILDISRTKVHSLPNHGLEN), and 241–259 (LKKLRARSTYRLKKLPNLD). Asn-191 and Asn-199 each carry an N-linked (GlcNAc...) asparagine glycan. 4 cysteine pairs are disulfide-bonded: Cys-275/Cys-345, Cys-276/Cys-292, Cys-276/Cys-355, and Cys-292/Cys-337. An N-linked (GlcNAc...) asparagine glycan is attached at Asn-293. Residue Tyr-334 is modified to Sulfotyrosine. The chain crosses the membrane as a helical span at residues 366 to 386 (VLIWFISILAITGNTTVLVVL). Over 387–397 (TTSQYKLTVPR) the chain is Cytoplasmic. A helical transmembrane segment spans residues 398–420 (FLMCNLAFADLCIGIYLLLIASV). The Extracellular segment spans residues 421 to 442 (DIHTKSQYHNYAIDWQTGAGCD). Cys-441 and Cys-516 are joined by a disulfide. Residues 443-464 (AAGFFTVFASELSVYTLTAITL) form a helical membrane-spanning segment. Over 465 to 484 (ERWHTITHAMQLECKVQLRH) the chain is Cytoplasmic. A helical transmembrane segment spans residues 485–507 (AASVMVLGWTFAFAAALFPIFGI). The Extracellular segment spans residues 508–527 (SSYMKVSICLPMDIDSPLSQ). The helical transmembrane segment at 528 to 549 (LYVMALLVLNVLAFVVICGCYT) threads the bilayer. Topologically, residues 550–572 (HIYLTVRNPTIVSSSSDTKIAKR) are cytoplasmic. Residues 573-596 (MATLIFTDFLCMAPISFFAISASL) traverse the membrane as a helical segment. At 597 to 607 (KVPLITVSKAK) the chain is on the extracellular side. The chain crosses the membrane as a helical span at residues 608–629 (ILLVLFYPINSCANPFLYAIFT). Residues 630–692 (KNFRRDFFIL…LVPLNHSSQN (63 aa)) are Cytoplasmic-facing.

Belongs to the G-protein coupled receptor 1 family. FSH/LSH/TSH subfamily. In terms of assembly, homotrimer. Functions as a homotrimer binding the FSH hormone heterodimer composed of CGA and FSHB. Interacts with ARRB2. Interacts with APPL2; interaction is independent of follicle stimulating hormone stimulation. N-glycosylated; indirectly required for FSH-binding, possibly via a conformational change that allows high affinity binding of hormone. Post-translationally, sulfated. Sertoli cells and ovarian granulosa cells.

The protein resides in the cell membrane. Functionally, g protein-coupled receptor for follitropin, the follicle-stimulating hormone. Through cAMP production activates the downstream PI3K-AKT and ERK1/ERK2 signaling pathways. The polypeptide is Follicle-stimulating hormone receptor (Fshr) (Rattus norvegicus (Rat)).